An 809-amino-acid chain; its full sequence is Bifunctional enzyme MurC/Ddl (809 aa).

Residues 1–450 (MKGTPQYHFI…GEALKDFNPK (450 aa)) are UDP-N-acetylmuramate--alanine ligase. ATP-binding positions include 111 to 117 (GSHGKTG) and 606 to 661 (IETF…SREI). Positions 451–809 (KLSIGLVCGG…FTKEQDLVKR (359 aa)) are D-alanine--D-alanine ligase. Positions 573–784 (KRIASAVGVP…QEQIVDHFII (212 aa)) constitute an ATP-grasp domain. Mg(2+)-binding residues include aspartate 738, glutamate 751, and asparagine 753.

In the N-terminal section; belongs to the MurCDEF family. It in the C-terminal section; belongs to the D-alanine--D-alanine ligase family. Requires Mg(2+) as cofactor. The cofactor is Mn(2+).

Its subcellular location is the cytoplasm. The enzyme catalyses UDP-N-acetyl-alpha-D-muramate + L-alanine + ATP = UDP-N-acetyl-alpha-D-muramoyl-L-alanine + ADP + phosphate + H(+). It catalyses the reaction 2 D-alanine + ATP = D-alanyl-D-alanine + ADP + phosphate + H(+). It functions in the pathway cell wall biogenesis; peptidoglycan biosynthesis. In terms of biological role, cell wall formation. The protein is Bifunctional enzyme MurC/Ddl (murC/ddl) of Chlamydia pneumoniae (Chlamydophila pneumoniae).